The sequence spans 1021 residues: MATEGAAQLGNRVAGMVCSLWVLLLVSSVLALEEVLLDTTGETSEIGWLTYPPGGWDEVSVLDDQRRLTRTFEACHVAGAPPGTGQDNWLQTHFVERRGAQRAHIRLHFSVRACSSLGVSGGTCRETFTLYYRQAEEPDSPDSVSSWHLKRWTKVDTIAADESFPSSSSSSSSSSSAAWAVGPHGAGQRAGLQLNVKERSFGPLTQRGFYVAFQDTGACLALVAVRLFSYTCPAVLRSFASFPETQASGAGGASLVAAVGTCVAHAEPEEDGVGGQAGGSPPRLHCNGEGKWMVAVGGCRCQPGYQPARGDKACQACPRGLYKSSAGNAPCSPCPARSHAPNPAAPVCPCLEGFYRASSDPPEAPCTGPPSAPQELWFEVQGSALMLHWRLPRELGGRGDLLFNVVCKECEGRQEPASGGGGTCHRCRDEVHFDPRQRGLTESRVLVGGLRAHVPYILEVQAVNGVSELSPDPPQAAAINVSTSHEVPSAVPVVHQVSRASNSITVSWPQPDQTNGNILDYQLRYYDQAEDESHSFTLTSETNTATVTQLSPGHIYGFQVRARTAAGHGPYGGKVYFQTLPQGELSSQLPERLSLVIGSILGALAFLLLAAITVLAVVFQRKRRGTGYTEQLQQYSSPGLGVKYYIDPSTYEDPCQAIRELAREVDPAYIKIEEVIGTGSFGEVRQGRLQPRGRREQTVAIQALWAGGAESLQMTFLGRAAVLGQFQHPNILRLEGVVTKSRPLMVLTEFMELGPLDSFLRQREGQFSSLQLVAMQRGVAAAMQYLSSFAFVHRSLSAHSVLVNSHLVCKVARLGHSPQGPSCLLRWAAPEVIAHGKHTTSSDVWSFGILMWEVMSYGERPYWDMSEQEVLNAIEQEFRLPPPPGCPPGLHLLMLDTWQKDRARRPHFDQLVAAFDKMIRKPDTLQAGGDPGERPSQALLTPVALDFPCLDSPQAWLSAIGLECYQDNFSKFGLCTFSDVAQLSLEDLPALGITLAGHQKKLLHHIQLLQQHLRQQGSVEV.

Residues 1 to 31 (MATEGAAQLGNRVAGMVCSLWVLLLVSSVLA) form the signal peptide. At 32–594 (LEEVLLDTTG…LSSQLPERLS (563 aa)) the chain is on the extracellular side. The Eph LBD domain maps to 33 to 237 (EEVLLDTTGE…FSYTCPAVLR (205 aa)). Positions 163–182 (SFPSSSSSSSSSSSAAWAVG) are disordered. Low complexity predominate over residues 166–176 (SSSSSSSSSSS). Fibronectin type-III domains follow at residues 369–486 (PPSA…TSHE) and 487–582 (VPSA…TLPQ). Residue Asn-480 is glycosylated (N-linked (GlcNAc...) asparagine). A helical transmembrane segment spans residues 595–615 (LVIGSILGALAFLLLAAITVL). Over 616-1021 (AVVFQRKRRG…HLRQQGSVEV (406 aa)) the chain is Cytoplasmic. The 250-residue stretch at 670 to 919 (IKIEEVIGTG…QLVAAFDKMI (250 aa)) folds into the Protein kinase domain. ATP is bound at residue 676–684 (IGTGSFGEV). The 65-residue stretch at 948–1012 (PCLDSPQAWL…LHHIQLLQQH (65 aa)) folds into the SAM domain. The PDZ-binding signature appears at 1019-1021 (VEV).

Belongs to the protein kinase superfamily. Tyr protein kinase family. Ephrin receptor subfamily. In terms of assembly, interacts with CBL and EPHB1. Interacts with FYN; this interaction takes place in a ligand-independent manner. Ligand-binding increases phosphorylation on tyrosine residues. Phosphorylation on tyrosine residues is mediated by transphosphorylation by the catalytically active EPHB1 in a ligand-independent manner. Tyrosine phosphorylation of the receptor may act as a switch on the functional transition from cell adhesion/attraction to de-adhesion/repulsion. As to expression, expressed in brain. Expressed in non invasive breast carcinoma cell lines (at protein level). Strong expression in brain and pancreas, and weak expression in other tissues, such as heart, placenta, lung, liver, skeletal muscle and kidney. Expressed in breast non invasive tumors but not in metastatic lesions. Isoform 3 is expressed in cell lines of glioblastomas, anaplastic astrocytomas, gliosarcomas and astrocytomas. Isoform 3 is not detected in normal tissues.

Its subcellular location is the membrane. The protein localises to the secreted. Its function is as follows. Kinase-defective receptor for members of the ephrin-B family. Binds to ephrin-B1 and ephrin-B2. Modulates cell adhesion and migration by exerting both positive and negative effects upon stimulation with ephrin-B2. Inhibits JNK activation, T-cell receptor-induced IL-2 secretion and CD25 expression upon stimulation with ephrin-B2. This chain is Ephrin type-B receptor 6 (EPHB6), found in Homo sapiens (Human).